The primary structure comprises 248 residues: UPF0736 protein BCAH187_A1335 (248 aa).

The protein belongs to the UPF0736 family.

This is UPF0736 protein BCAH187_A1335 from Bacillus cereus (strain AH187).